Here is a 1224-residue protein sequence, read N- to C-terminus: Cytosolic carboxypeptidase 1 (1224 aa).

A disordered region spans residues 361–398 (PPDVDDVVDESDDNDDAETESEIETEDDKDQNFKNDDI). Residues 363–389 (DVDDVVDESDDNDDAETESEIETEDDK) are compositionally biased toward acidic residues. Residues 846-1136 (YPYTYSTLKM…KFCVGLLRLK (291 aa)) form the Peptidase M14 domain. Zn(2+) is bound by residues His-918, Glu-921, and His-1015. Glu-1100 serves as the catalytic Proton donor/acceptor. Positions 1186–1197 (SAESNDDQDAEL) are enriched in acidic residues. Residues 1186-1224 (SAESNDDQDAELADNVGDYEANNQEDGLSDSDSTRILLS) are disordered. Positions 1206 to 1224 (ANNQEDGLSDSDSTRILLS) are enriched in polar residues.

The protein belongs to the peptidase M14 family. It depends on Zn(2+) as a cofactor.

Its subcellular location is the cytoplasm. It is found in the cytosol. The protein localises to the nucleus. The protein resides in the mitochondrion. The enzyme catalyses (L-glutamyl)(n+1)-gamma-L-glutamyl-L-glutamyl-[protein] + H2O = (L-glutamyl)(n)-gamma-L-glutamyl-L-glutamyl-[protein] + L-glutamate. It carries out the reaction C-terminal L-alpha-aminoacyl-L-glutamyl-L-glutamyl-[tubulin] + H2O = C-terminal L-alpha-aminoacyl-L-glutamyl-[tubulin] + L-glutamate. In terms of biological role, metallocarboxypeptidase that mediates protein deglutamylation of tubulin and non-tubulin target proteins. Catalyzes the removal of polyglutamate side chains present on the gamma-carboxyl group of glutamate residues within the C-terminal tail of alpha- and beta-tubulin. Specifically cleaves tubulin long-side-chains, while it is not able to remove the branching point glutamate. Also catalyzes the removal of polyglutamate residues from the carboxy-terminus of alpha-tubulin as well as non-tubulin proteins. The sequence is that of Cytosolic carboxypeptidase 1 (AGTPBP1) from Gallus gallus (Chicken).